The chain runs to 580 residues: Viral transcription factor IE2 (580 aa).

Residues 1–11 (MESSAKRKMDP) are compositionally biased toward basic and acidic residues. Disordered stretches follow at residues 1–30 (MESS…TPVT) and 99–161 (DSSS…VIIK). Positions 99-133 (DSSSTGPTLTTHSCSVSSAPLNKPTPTSVAVTNTP) are enriched in polar residues. Glycyl lysine isopeptide (Lys-Gly) (interchain with G-Cter in SUMO) cross-links involve residues lysine 175 and lysine 180. Positions 199 to 202 (CIVI) match the SUMO-interacting motif 1/SIM1 motif. Residues 200-208 (IVISDSEEE) form a non-covalent SUMO1 binding region (SIM) region. Phosphoserine is present on residues serine 203 and serine 205. The interval 206 to 336 (EEEQGEEVET…SKRISELDNE (131 aa)) is disordered. 3 stretches are compositionally biased toward low complexity: residues 216 to 236 (RGAT…TSPT), 259 to 271 (SSSS…SASD), and 302 to 317 (AASS…SSGG). The SUMO-interacting motif 1/SIM2 motif lies at 410–413 (IQII). The SUMO-interacting motif 1/SIM3 motif lies at 501–504 (VDLL).

Belongs to the HHV-5 IE2 protein family. Interacts with host SUMO-modified form of TATA-binding protein (TBP)-associated factor 12/TAF12 in a SIM-dependent manner; this interaction increases the transactivation activity of IE2. Interacts with host CHAF1A. Interacts with several components of the host transcriptional machinery including TBP, TF2B and CREB1. Interacts with host DNA replication licensing factor MCM3. Interacts with host PLSCR1; this interaction inhibits IE2 transactivating activity. Post-translationally, phosphorylated by host CK2 at Ser-203 and Ser-205; leading to enhanced SUMOylation. In terms of processing, SUMOylated; SUMOylation is enhanced when IE2 is phosphorylated by host CK2. The sumoylation is necessary for efficient replication of the virus and thus for the function of this viral transcription factor.

Its subcellular location is the host nucleus. Its function is as follows. Stimulates viral early and late gene expression and thus play a crucial role in the regulation of productive infection. Selectively drives host RNA Pol II transcription initiation at a subset of viral early-late and late promoters without substantially affecting Pol II transcription of expressed host genes. Mechanistically, forms a repressive complex at the major immediate-early promoter region involving direct association with host nucleosomes and TBP. Concerning activation, stimulates transcription by binding nearby, but not within, core promoter regions. In addition, activates quiescent cells to reenter the cell cycle and up-regulates several E2F-responsive genes, which are responsible for pushing the cell into S phase. In S-phase, inhibits cellular DNA synthesis and blocks further cell cycle progression. The polypeptide is Viral transcription factor IE2 (UL122) (Homo sapiens (Human)).